We begin with the raw amino-acid sequence, 143 residues long: Large ribosomal subunit protein uL15 (143 aa).

Residues 1–45 are disordered; sequence MLLNTVQPGVGAKHAKRRVGRGIGSGLGKTCGRGHKGQKSRAGGF. Gly residues predominate over residues 21–31; sequence RGIGSGLGKTC.

The protein belongs to the universal ribosomal protein uL15 family. In terms of assembly, part of the 50S ribosomal subunit.

Binds to the 23S rRNA. This is Large ribosomal subunit protein uL15 from Chromobacterium violaceum (strain ATCC 12472 / DSM 30191 / JCM 1249 / CCUG 213 / NBRC 12614 / NCIMB 9131 / NCTC 9757 / MK).